The primary structure comprises 126 residues: Holo-[acyl-carrier-protein] synthase (126 aa).

Positions 9 and 57 each coordinate Mg(2+).

The protein belongs to the P-Pant transferase superfamily. AcpS family. The cofactor is Mg(2+).

The protein localises to the cytoplasm. It carries out the reaction apo-[ACP] + CoA = holo-[ACP] + adenosine 3',5'-bisphosphate + H(+). Transfers the 4'-phosphopantetheine moiety from coenzyme A to a Ser of acyl-carrier-protein. The polypeptide is Holo-[acyl-carrier-protein] synthase (Pseudoalteromonas atlantica (strain T6c / ATCC BAA-1087)).